A 77-amino-acid chain; its full sequence is Acyl carrier protein (77 aa).

Residues 1 to 76 form the Carrier domain; the sequence is MADFEKIKSI…DVIKFIDKLK (76 aa). Residue serine 36 is modified to O-(pantetheine 4'-phosphoryl)serine.

This sequence belongs to the acyl carrier protein (ACP) family. Post-translationally, 4'-phosphopantetheine is transferred from CoA to a specific serine of apo-ACP by AcpS. This modification is essential for activity because fatty acids are bound in thioester linkage to the sulfhydryl of the prosthetic group.

The protein resides in the cytoplasm. It participates in lipid metabolism; fatty acid biosynthesis. Functionally, carrier of the growing fatty acid chain in fatty acid biosynthesis. The chain is Acyl carrier protein from Leptospira biflexa serovar Patoc (strain Patoc 1 / Ames).